The sequence spans 406 residues: Glutamyl-tRNA reductase (406 aa).

Substrate-binding positions include 49-52 (TCHR), Ser107, 112-114 (EPQ), and Gln118. Cys50 (nucleophile) is an active-site residue. 187–192 (GAGETG) lines the NADP(+) pocket.

The protein belongs to the glutamyl-tRNA reductase family. In terms of assembly, homodimer.

It carries out the reaction (S)-4-amino-5-oxopentanoate + tRNA(Glu) + NADP(+) = L-glutamyl-tRNA(Glu) + NADPH + H(+). It participates in porphyrin-containing compound metabolism; protoporphyrin-IX biosynthesis; 5-aminolevulinate from L-glutamyl-tRNA(Glu): step 1/2. Its function is as follows. Catalyzes the NADPH-dependent reduction of glutamyl-tRNA(Glu) to glutamate 1-semialdehyde (GSA). This chain is Glutamyl-tRNA reductase, found in Thermomicrobium roseum (strain ATCC 27502 / DSM 5159 / P-2).